The following is a 49-amino-acid chain: Large ribosomal subunit protein bL33 (49 aa).

The protein belongs to the bacterial ribosomal protein bL33 family.

The chain is Large ribosomal subunit protein bL33 from Heliobacterium modesticaldum (strain ATCC 51547 / Ice1).